The primary structure comprises 208 residues: Ubiquitin-conjugating enzyme E2 S (208 aa).

Residues 14-160 (QTIRQVMKEL…ARMMTEIHAQ (147 aa)) form the UBC core domain. Cys98 (glycyl thioester intermediate) is an active-site residue. Residues 161-193 (PAKCGAGASDAKDDDGPSTKKHAGLDKKLQDKK) are disordered. Residues 170–193 (DAKDDDGPSTKKHAGLDKKLQDKK) show a composition bias toward basic and acidic residues.

The protein belongs to the ubiquitin-conjugating enzyme family.

It carries out the reaction S-ubiquitinyl-[E1 ubiquitin-activating enzyme]-L-cysteine + [E2 ubiquitin-conjugating enzyme]-L-cysteine = [E1 ubiquitin-activating enzyme]-L-cysteine + S-ubiquitinyl-[E2 ubiquitin-conjugating enzyme]-L-cysteine.. It functions in the pathway protein modification; protein ubiquitination. Its function is as follows. Catalyzes the covalent attachment of ubiquitin to other proteins. Acts as an essential factor of the anaphase promoting complex/cyclosome (APC/C), a cell cycle-regulated ubiquitin ligase that controls progression through mitosis. Acts by specifically elongating polyubiquitin chains initiated by the E2 enzyme vih/UbcH10 on APC/C substrates, enhancing the degradation of APC/C substrates by the proteasome and promoting mitotic exit. The protein is Ubiquitin-conjugating enzyme E2 S of Drosophila virilis (Fruit fly).